Here is a 594-residue protein sequence, read N- to C-terminus: DNA ligase (594 aa).

An ATP-binding site is contributed by Glu-256. The active-site N6-AMP-lysine intermediate is the Lys-258. Arg-263, Arg-279, Glu-309, Phe-349, Arg-426, and Lys-432 together coordinate ATP.

It belongs to the ATP-dependent DNA ligase family. Mg(2+) is required as a cofactor.

It catalyses the reaction ATP + (deoxyribonucleotide)n-3'-hydroxyl + 5'-phospho-(deoxyribonucleotide)m = (deoxyribonucleotide)n+m + AMP + diphosphate.. DNA ligase that seals nicks in double-stranded DNA during DNA replication, DNA recombination and DNA repair. In Ignicoccus hospitalis (strain KIN4/I / DSM 18386 / JCM 14125), this protein is DNA ligase.